Reading from the N-terminus, the 515-residue chain is 2-isopropylmalate synthase (515 aa).

Positions 4 to 266 (IKFFDTTLRD…ETRLNLQEIK (263 aa)) constitute a Pyruvate carboxyltransferase domain. D13, H201, H203, and N237 together coordinate Mn(2+). The interval 391 to 515 (QLSSIQVQYG…RGENEKVATP (125 aa)) is regulatory domain.

The protein belongs to the alpha-IPM synthase/homocitrate synthase family. LeuA type 1 subfamily. As to quaternary structure, homodimer. It depends on Mn(2+) as a cofactor.

The protein localises to the cytoplasm. It catalyses the reaction 3-methyl-2-oxobutanoate + acetyl-CoA + H2O = (2S)-2-isopropylmalate + CoA + H(+). Its pathway is amino-acid biosynthesis; L-leucine biosynthesis; L-leucine from 3-methyl-2-oxobutanoate: step 1/4. Catalyzes the condensation of the acetyl group of acetyl-CoA with 3-methyl-2-oxobutanoate (2-ketoisovalerate) to form 3-carboxy-3-hydroxy-4-methylpentanoate (2-isopropylmalate). The polypeptide is 2-isopropylmalate synthase (Geobacillus kaustophilus (strain HTA426)).